Here is a 531-residue protein sequence, read N- to C-terminus: Chaperonin GroEL 2 (531 aa).

Residues 30–33, 87–91, Gly-414, and Asp-494 each bind ATP; these read TLGP and DGTTT.

It belongs to the chaperonin (HSP60) family. In terms of assembly, forms a cylinder of 14 subunits composed of two heptameric rings stacked back-to-back. Interacts with the co-chaperonin GroES.

It is found in the cytoplasm. The catalysed reaction is ATP + H2O + a folded polypeptide = ADP + phosphate + an unfolded polypeptide.. Its function is as follows. Together with its co-chaperonin GroES, plays an essential role in assisting protein folding. The GroEL-GroES system forms a nano-cage that allows encapsulation of the non-native substrate proteins and provides a physical environment optimized to promote and accelerate protein folding. This chain is Chaperonin GroEL 2, found in Cutibacterium acnes (strain DSM 16379 / KPA171202) (Propionibacterium acnes).